Reading from the N-terminus, the 1349-residue chain is Aldehyde oxidase 2 (1349 aa).

A 2Fe-2S ferredoxin-type domain is found at 8 to 96 (DELVFFVNGR…GAAVTTVEGV (89 aa)). 4 residues coordinate [2Fe-2S] cluster: cysteine 47, cysteine 52, cysteine 55, and cysteine 78. Glutamine 117 contacts Mo-molybdopterin. [2Fe-2S] cluster contacts are provided by cysteine 118, cysteine 121, cysteine 153, and cysteine 155. Cysteine 155 provides a ligand contact to Mo-molybdopterin. The FAD-binding PCMH-type domain occupies 240–425 (FYGERVTWIS…ESVHIPHSQK (186 aa)). Residues 268-275 (LVVGNTSL), alanine 349, serine 358, histidine 362, aspartate 371, and leucine 415 each bind FAD. Residues 816–817 (GF), 1098–1101 (ASVG), glutamine 1213, and leucine 1278 contribute to the Mo-molybdopterin site. Residue glutamate 1280 is the Proton acceptor; for azaheterocycle hydroxylase activity of the active site.

The protein belongs to the xanthine dehydrogenase family. Homodimer. [2Fe-2S] cluster is required as a cofactor. It depends on FAD as a cofactor. The cofactor is Mo-molybdopterin. Only detected at very few levels in nasal mucosa.

Its subcellular location is the cytoplasm. The enzyme catalyses an aldehyde + O2 + H2O = a carboxylate + H2O2 + H(+). Functionally, oxidase with broad substrate specificity, oxidizing aromatic azaheterocycles, such as phthalazine, as well as aldehydes, such as benzaldehyde and retinal. In Macaca fascicularis (Crab-eating macaque), this protein is Aldehyde oxidase 2 (AOX2).